A 397-amino-acid chain; its full sequence is Monooxygenase 1 (397 aa).

This sequence belongs to the 3-hydroxybenzoate 6-hydroxylase family. In terms of assembly, monomer. Requires FAD as cofactor. Expressed in seedlings, roots, leaves, flowers and siliques.

This chain is Monooxygenase 1, found in Arabidopsis thaliana (Mouse-ear cress).